The following is a 141-amino-acid chain: Large ribosomal subunit protein bL17 (141 aa).

Belongs to the bacterial ribosomal protein bL17 family. As to quaternary structure, part of the 50S ribosomal subunit. Contacts protein L32.

In Sinorhizobium medicae (strain WSM419) (Ensifer medicae), this protein is Large ribosomal subunit protein bL17.